We begin with the raw amino-acid sequence, 239 residues long: Caffeoyl-CoA O-methyltransferase 1 (239 aa).

A substrate-binding site is contributed by lysine 13. S-adenosyl-L-methionine contacts are provided by residues threonine 55, glutamate 77, 79–80 (GV), serine 85, aspartate 103, and alanine 132. A substrate-binding site is contributed by aspartate 155. Aspartate 155 contributes to the a divalent metal cation binding site. Position 157 (aspartate 157) interacts with S-adenosyl-L-methionine. Aspartate 181 and asparagine 182 together coordinate a divalent metal cation. Substrate is bound at residue asparagine 186.

It belongs to the class I-like SAM-binding methyltransferase superfamily. Cation-dependent O-methyltransferase family. CCoAMT subfamily. Monomer. Requires Mg(2+) as cofactor. In terms of tissue distribution, mostly expressed in the bottom and middle parts of the stems.

The catalysed reaction is (E)-caffeoyl-CoA + S-adenosyl-L-methionine = (E)-feruloyl-CoA + S-adenosyl-L-homocysteine + H(+). It participates in aromatic compound metabolism; phenylpropanoid biosynthesis. Its function is as follows. Methylates caffeoyl-CoA to feruloyl-CoA and 5-hydroxyferuloyl-CoA to sinapoyl-CoA. Plays a role in the synthesis of feruloylated polysaccharides. Involved in the reinforcement of the plant cell wall. Also involved in the responding to wounding or pathogen challenge by the increased formation of cell wall-bound ferulic acid polymers. The protein is Caffeoyl-CoA O-methyltransferase 1 (CCOAOMT1) of Nicotiana tabacum (Common tobacco).